Here is a 134-residue protein sequence, read N- to C-terminus: MTRPTSSAPSQRMLRVGEQVRAAITQVLQRGEVRDDIIEATVISISEVRMSPDLKIATAYVTPLGVSDHSIVIEALNRHAKFIRGRLGPQLRQMKYMPEVRFRDDTSFDNYKKIDELLRSPEVSRDLDGDNDDQ.

The protein belongs to the RbfA family. As to quaternary structure, monomer. Binds 30S ribosomal subunits, but not 50S ribosomal subunits or 70S ribosomes.

The protein resides in the cytoplasm. One of several proteins that assist in the late maturation steps of the functional core of the 30S ribosomal subunit. Associates with free 30S ribosomal subunits (but not with 30S subunits that are part of 70S ribosomes or polysomes). Required for efficient processing of 16S rRNA. May interact with the 5'-terminal helix region of 16S rRNA. This is Ribosome-binding factor A from Rhizobium etli (strain CIAT 652).